Consider the following 259-residue polypeptide: Putative zinc metalloprotease Rip2 (259 aa).

Helical transmembrane passes span 14–34 and 39–59; these read PIFLGLLGLTAVGGALAWLAG and PLAYAGVFVMVIAGWLVSLCL. His-60 contributes to the Zn(2+) binding site. Glu-61 is an active-site residue. Position 64 (His-64) interacts with Zn(2+). 4 consecutive transmembrane segments (helical) span residues 97–117, 128–148, 156–176, and 211–231; these read GLPMLFIALGGIGLPGAAVYV, TLVSLAGPTVNLALAMLLLAA, IHAVLWAGVAFLAFLQLTALV, and LVFLLVLFLAPTLNGWFFGVV.

Belongs to the peptidase M50B family. Zn(2+) is required as a cofactor.

It localises to the cell membrane. This chain is Putative zinc metalloprotease Rip2 (rip2), found in Mycobacterium tuberculosis (strain ATCC 25618 / H37Rv).